The primary structure comprises 240 residues: Large ribosomal subunit protein uL3 (240 aa).

Disordered stretches follow at residues 138–158 and 215–240; these read SISHRSHGSTGGRQDPGKTFK and EAPLPGKFRLANEGAEPAPATESAEG. Gln151 bears the N5-methylglutamine mark.

This sequence belongs to the universal ribosomal protein uL3 family. As to quaternary structure, part of the 50S ribosomal subunit. Forms a cluster with proteins L14 and L19. Methylated by PrmB.

One of the primary rRNA binding proteins, it binds directly near the 3'-end of the 23S rRNA, where it nucleates assembly of the 50S subunit. This is Large ribosomal subunit protein uL3 from Beijerinckia indica subsp. indica (strain ATCC 9039 / DSM 1715 / NCIMB 8712).